Here is a 401-residue protein sequence, read N- to C-terminus: Imidazolonepropionase (401 aa).

Positions 70 and 72 each coordinate Fe(3+). Histidine 70 and histidine 72 together coordinate Zn(2+). Residues arginine 79, tyrosine 142, and histidine 175 each contribute to the 4-imidazolone-5-propanoate site. Tyrosine 142 contacts N-formimidoyl-L-glutamate. Histidine 238 contributes to the Fe(3+) binding site. Histidine 238 contributes to the Zn(2+) binding site. Glutamine 241 contacts 4-imidazolone-5-propanoate. Aspartate 313 is a Fe(3+) binding site. Aspartate 313 serves as a coordination point for Zn(2+). N-formimidoyl-L-glutamate-binding residues include asparagine 315 and glycine 317. Position 318 (threonine 318) interacts with 4-imidazolone-5-propanoate.

Belongs to the metallo-dependent hydrolases superfamily. HutI family. It depends on Zn(2+) as a cofactor. Requires Fe(3+) as cofactor.

Its subcellular location is the cytoplasm. The catalysed reaction is 4-imidazolone-5-propanoate + H2O = N-formimidoyl-L-glutamate. It functions in the pathway amino-acid degradation; L-histidine degradation into L-glutamate; N-formimidoyl-L-glutamate from L-histidine: step 3/3. In terms of biological role, catalyzes the hydrolytic cleavage of the carbon-nitrogen bond in imidazolone-5-propanoate to yield N-formimidoyl-L-glutamate. It is the third step in the universal histidine degradation pathway. This is Imidazolonepropionase from Acidiphilium cryptum (strain JF-5).